We begin with the raw amino-acid sequence, 80 residues long: Toxin-like peptide AaF1CA1 (80 aa).

The N-terminal stretch at 1-22 (MMKLVLFSVIVILFSLIGSIHG) is a signal peptide. In terms of domain architecture, LCN-type CS-alpha/beta spans 25–80 (VPGNYPLRPFRYRYGCAVPGDSDYCVRVCRKHGVRYGYCWFFTCWCEYLEDKNIKI). 3 disulfides stabilise this stretch: Cys40–Cys63, Cys49–Cys68, and Cys53–Cys70.

This sequence belongs to the long (3 C-C) scorpion toxin superfamily. Expressed by the venom gland.

It localises to the secreted. In terms of biological role, probable ion channel inhibitor. The sequence is that of Toxin-like peptide AaF1CA1 from Androctonus australis (Sahara scorpion).